The sequence spans 351 residues: Gene 58 protein (351 aa).

A run of 11 helical transmembrane segments spans residues 14–34 (FSTG…ATVF), 43–63 (QSVL…FCAV), 70–90 (LGLL…SWSL), 97–117 (LVPG…IVCF), 133–153 (LGFL…IYLT), 155–175 (VMFA…SHVW), 214–234 (LICL…LVMF), 240–260 (GVST…SLII), 268–288 (AVYS…GYLF), 293–313 (LSML…CLLY), and 328–348 (FILN…LLAQ).

Belongs to the herpesviridae BMRF2 family.

The protein resides in the host membrane. The protein is Gene 58 protein (58) of Connochaetes taurinus (Blue wildebeest).